Here is a 215-residue protein sequence, read N- to C-terminus: UPF0502 protein YceH (215 aa).

At K80 the chain carries N6-acetyllysine.

This sequence belongs to the UPF0502 family.

The chain is UPF0502 protein YceH from Shigella boydii serotype 4 (strain Sb227).